Consider the following 100-residue polypeptide: Large ribosomal subunit protein uL23 (100 aa).

Belongs to the universal ribosomal protein uL23 family. Part of the 50S ribosomal subunit. Contacts protein L29, and trigger factor when it is bound to the ribosome.

Its function is as follows. One of the early assembly proteins it binds 23S rRNA. One of the proteins that surrounds the polypeptide exit tunnel on the outside of the ribosome. Forms the main docking site for trigger factor binding to the ribosome. This chain is Large ribosomal subunit protein uL23, found in Synechococcus sp. (strain WH7803).